A 198-amino-acid polypeptide reads, in one-letter code: Transcription factor BHLH133 (198 aa).

Residues 114-127 form a basic motif; degenerate region; it reads SAESSQSYYAKNRR. The bHLH domain maps to 114 to 163; it reads SAESSQSYYAKNRRQRINERLRILQELIPNGTKVDISTMLEEAIQYVKFL. The tract at residues 128–163 is helix-loop-helix motif; the sequence is QRINERLRILQELIPNGTKVDISTMLEEAIQYVKFL.

It belongs to the bHLH protein family.

Its subcellular location is the nucleus. Its function is as follows. Transcription factor that acts as a regulator of iron homeostasis. May act as negative regulator of iron transportation from root to shoot. Does not seem to be involved in the suppression of the induction of iron deficiency responsive genes. The protein is Transcription factor BHLH133 of Oryza sativa subsp. japonica (Rice).